The chain runs to 312 residues: Putative mitochondrial transporter UCP3 (312 aa).

Residues 1–10 (MVGLKPSDVP) lie on the Mitochondrial intermembrane side of the membrane. A helical membrane pass occupies residues 11–32 (PTMAVKFLGAGTAACFADLVTF). Solcar repeat units follow at residues 11–105 (PTMA…VKQV), 114–206 (SSLT…LKEK), and 215–300 (DNFP…LKRA). The Mitochondrial matrix segment spans residues 33-76 (PLDTAKVRLQIQGENQAVQTARLVQYRGVLGTILTMVRTEGPCS). The helical transmembrane segment at 77–99 (PYNGLVAGLQRQMSFASIRIGLY) threads the bilayer. The Mitochondrial intermembrane segment spans residues 100–119 (DSVKQVYTPKGADNSSLTTR). The chain crosses the membrane as a helical span at residues 120-136 (ILAGCTTGAMAVTCAQP). At 137–183 (TDVVKVRFQASIHLGPSRSDRKYSGTMDAYRTIAREEGVRGLWKGTL) the chain is on the mitochondrial matrix side. The chain crosses the membrane as a helical span at residues 184–200 (PNIMRNAIVNCAEVVTY). The Mitochondrial intermembrane portion of the chain corresponds to 201-217 (DILKEKLLDYHLLTDNF). A helical transmembrane segment spans residues 218–237 (PCHFVSAFGAGFCATVVASP). Over 238-271 (VDVVKTRYMNSPPGQYFSPLDCMIKMVAQEGPTA) the chain is Mitochondrial matrix. Residues 272–294 (FYKGFTPSFLRLGSWNVVMFVTY) form a helical membrane-spanning segment. Residues 279-301 (SFLRLGSWNVVMFVTYEQLKRAL) form a purine nucleotide binding region. The Mitochondrial intermembrane segment spans residues 295–312 (EQLKRALMKVQMLRESPF).

This sequence belongs to the mitochondrial carrier (TC 2.A.29) family. As to quaternary structure, interacts with HAX1; the interaction is direct and calcium-dependent. Only in skeletal muscle and heart. Also expressed in white and brown adipose tissues. Is more expressed in glycolytic than in oxidative skeletal muscles.

The protein resides in the mitochondrion inner membrane. The proton transporter activity is activated by fatty acids (in vitro). The proton transporter activity is inhibited by ATP and ADP (in vitro). The effect of Ubiquinone/coenzyme Q10 on the proton transporter activity in reconstituted membranes is unclear (in vitro). Its function is as follows. Putative transmembrane transporter that plays a role in mitochondrial metabolism via an as yet unclear mechanism. Originally, this mitochondrial protein was thought to act as a proton transmembrane transporter from the mitochondrial intermembrane space into the matrix, causing proton leaks through the inner mitochondrial membrane, thereby uncoupling mitochondrial membrane potential generation from ATP synthesis. However, this function is controversial and uncoupling may not be the function, or at least not the main function, but rather a consequence of more conventional metabolite transporter activity. This chain is Putative mitochondrial transporter UCP3, found in Homo sapiens (Human).